A 60-amino-acid chain; its full sequence is MDKLKVTLIRSVIGRPQNQRDIVKGLGLGRVNSSVVVPDNAAMRGAIRKINHLVDVELAK.

This sequence belongs to the universal ribosomal protein uL30 family. In terms of assembly, part of the 50S ribosomal subunit.

This chain is Large ribosomal subunit protein uL30, found in Ligilactobacillus salivarius (strain UCC118) (Lactobacillus salivarius).